Here is a 165-residue protein sequence, read N- to C-terminus: LIM domain transcription factor LMO4.2 (165 aa).

2 consecutive LIM zinc-binding domains span residues Lys21 to Asn83 and Gly85 to Asn147.

In terms of biological role, acts as a positive cofactor of GATA transcription factors to establish the identity of the ventral mesoderm during gastrulation. Down-regulation in the dorsal mesoderm is necessary for the proper formation of this territory since, when present, lmo4 may bind ldb1 and restrict the availability of this cofactor for Spemman organizer transcription factors. At neurula stages, suppresses primary neuron differentiation and modulates gene expression at the Isthmic Organizer of the midbrain-hindbrain boundary. This Xenopus tropicalis (Western clawed frog) protein is LIM domain transcription factor LMO4.2 (lmo4.2).